A 371-amino-acid polypeptide reads, in one-letter code: Putative RNA-binding protein Luc7-like 1 (371 aa).

2 coiled-coil regions span residues 87–177 and 218–259; these read MDHL…RNSM and FIQI…LSRR. Residues 232-257 are compositionally biased toward basic and acidic residues; it reads VAEKQEKRNQDRLRRREEREREERLS. The tract at residues 232–371 is disordered; that stretch reads VAEKQEKRNQ…RSEEKEAGEI (140 aa). Residues 258-317 show a composition bias toward basic residues; the sequence is RRSGSRTRDRRRSRSRDRRRRRSRSTSRERRKLSRSRSRDRHRRHRSRSRSHSRGHRRAS. Composition is skewed to basic and acidic residues over residues 318-351 and 361-371; these read RDRS…DWRL and RRSEEKEAGEI. Phosphoserine occurs at positions 332, 336, and 363.

It belongs to the Luc7 family. As to expression, ubiquitous.

Its function is as follows. May bind to RNA via its Arg/Ser-rich domain. The polypeptide is Putative RNA-binding protein Luc7-like 1 (LUC7L) (Homo sapiens (Human)).